The primary structure comprises 495 residues: Glycerol kinase (495 aa).

Thr16 provides a ligand contact to ADP. Thr16 and Thr17 together coordinate ATP. Thr16 is a binding site for sn-glycerol 3-phosphate. Residue Arg20 participates in ADP binding. Sn-glycerol 3-phosphate is bound by residues Arg86, Glu87, Tyr138, and Asp246. Glycerol-binding residues include Arg86, Glu87, Tyr138, Asp246, and Gln247. ADP is bound by residues Thr268 and Gly316. 4 residues coordinate ATP: Thr268, Gly316, Gln320, and Gly417. The ADP site is built by Gly417 and Asn421.

It belongs to the FGGY kinase family.

The enzyme catalyses glycerol + ATP = sn-glycerol 3-phosphate + ADP + H(+). It functions in the pathway polyol metabolism; glycerol degradation via glycerol kinase pathway; sn-glycerol 3-phosphate from glycerol: step 1/1. Inhibited by fructose 1,6-bisphosphate (FBP). Key enzyme in the regulation of glycerol uptake and metabolism. Catalyzes the phosphorylation of glycerol to yield sn-glycerol 3-phosphate. In Synechocystis sp. (strain ATCC 27184 / PCC 6803 / Kazusa), this protein is Glycerol kinase.